A 1040-amino-acid chain; its full sequence is Contactin-2 (1040 aa).

A signal peptide spans 1 to 30 (MGTHARKKASLLLLVLATVALVSSPGWSFA). 6 consecutive Ig-like C2-type domains span residues 39–130 (PIFE…AVLR), 135–224 (QEFS…SVFS), 241–324 (PSIK…GRII), 329–413 (PEWL…AELA), 419–506 (PDFR…GILS), and 511–605 (TKIT…ATVL). 4 cysteine pairs are disulfide-bonded: Cys-63–Cys-113, Cys-157–Cys-209, Cys-263–Cys-308, and Cys-350–Cys-397. 3 N-linked (GlcNAc...) asparagine glycosylation sites follow: Asn-78, Asn-200, and Asn-206. N-linked (GlcNAc...) asparagine glycosylation is found at Asn-463, Asn-479, Asn-500, and Asn-527. Fibronectin type-III domains are found at residues 612–710 (PPGG…TKEA), 715–812 (APSG…SAEE), 817–913 (APAK…VKPP), and 917–1008 (PPGN…NGGT). N-linked (GlcNAc...) asparagine glycosylation occurs at Asn-777. Residues 796–798 (RGD) carry the Cell attachment site motif. N-linked (GlcNAc...) asparagine glycosylation is found at Asn-832, Asn-920, and Asn-942. The tract at residues 895-921 (RAGTGPASPSADAMTVKPPPRRPPGNI) is disordered. Ala-1015 is lipidated: GPI-anchor amidated alanine. Residues 1016 to 1040 (AARPAHPGPAFSCMVILMLAGYQKL) constitute a propeptide, removed in mature form.

The protein belongs to the immunoglobulin superfamily. Contactin family. In terms of tissue distribution, in neural tissues in embryos, and in adult brain, spinal cord and cerebellum.

It is found in the cell membrane. May play a role in the initial growth and guidance of axons. May be involved in cell adhesion. In conjunction with another transmembrane protein, CNTNAP2, contributes to the organization of axonal domains at nodes of Ranvier by maintaining voltage-gated potassium channels at the juxtaparanodal region. The protein is Contactin-2 (Cntn2) of Rattus norvegicus (Rat).